The chain runs to 101 residues: NAD(P)H-quinone oxidoreductase subunit 4L, chloroplastic (101 aa).

3 helical membrane passes run 2 to 22 (ILEH…YGLI), 32 to 52 (MCLE…SDFF), and 61 to 81 (IFSI…LAIV).

This sequence belongs to the complex I subunit 4L family. As to quaternary structure, NDH is composed of at least 16 different subunits, 5 of which are encoded in the nucleus.

Its subcellular location is the plastid. The protein localises to the chloroplast thylakoid membrane. It carries out the reaction a plastoquinone + NADH + (n+1) H(+)(in) = a plastoquinol + NAD(+) + n H(+)(out). It catalyses the reaction a plastoquinone + NADPH + (n+1) H(+)(in) = a plastoquinol + NADP(+) + n H(+)(out). Its function is as follows. NDH shuttles electrons from NAD(P)H:plastoquinone, via FMN and iron-sulfur (Fe-S) centers, to quinones in the photosynthetic chain and possibly in a chloroplast respiratory chain. The immediate electron acceptor for the enzyme in this species is believed to be plastoquinone. Couples the redox reaction to proton translocation, and thus conserves the redox energy in a proton gradient. The sequence is that of NAD(P)H-quinone oxidoreductase subunit 4L, chloroplastic from Nicotiana sylvestris (Wood tobacco).